Reading from the N-terminus, the 185-residue chain is Ribosome-recycling factor (185 aa).

The interval 138-160 (AMDKAVKDGEVGEDEGARGEKEL) is disordered.

This sequence belongs to the RRF family.

It localises to the cytoplasm. In terms of biological role, responsible for the release of ribosomes from messenger RNA at the termination of protein biosynthesis. May increase the efficiency of translation by recycling ribosomes from one round of translation to another. The chain is Ribosome-recycling factor from Micrococcus luteus (strain ATCC 4698 / DSM 20030 / JCM 1464 / CCM 169 / CCUG 5858 / IAM 1056 / NBRC 3333 / NCIMB 9278 / NCTC 2665 / VKM Ac-2230) (Micrococcus lysodeikticus).